The primary structure comprises 127 residues: Large ribosomal subunit protein bL21 (127 aa).

Positions 102 to 127 (TDNAKPTKGPRPKKAKAEAPAADAAE) are disordered.

This sequence belongs to the bacterial ribosomal protein bL21 family. In terms of assembly, part of the 50S ribosomal subunit. Contacts protein L20.

In terms of biological role, this protein binds to 23S rRNA in the presence of protein L20. The protein is Large ribosomal subunit protein bL21 of Bradyrhizobium sp. (strain BTAi1 / ATCC BAA-1182).